The following is a 236-amino-acid chain: Lectin CPL (236 aa).

Mn(2+)-binding residues include glutamate 8 and aspartate 10. Positions 10, 12, 14, and 19 each coordinate Ca(2+). Asparagine 14 provides a ligand contact to a carbohydrate. Positions 19 and 24 each coordinate Mn(2+). Residues 99–100 (VY), aspartate 207, and arginine 227 each bind a carbohydrate.

Belongs to the leguminous lectin family. Homotetramer; dimer of dimers. In terms of processing, concanavalin A-like lectins of the Diocleinae subtribe undergo proteolytic processing referred to as circular permutation. The propeptide is split into an N-terminal and a C-terminal part, the gamma and beta chain, respectively. These are then religated in beta-gamma order to form the mature alpha chain. The beta and gamma chains can often be detected in cell extracts. Residues 1-118 of the mature chain, as displayed here, probably constitute the beta chain in the propeptide, residues 119-236 the gamma chain.

Functionally, D-mannose/D-glucose-binding lectin that also binds derivative alpha-methyl-D-mannppyranoside. Has hemagglutinating activity towards rabbit erythrocytes. This is Lectin CPL from Bionia pedicellata (Camptosema pedicellatum).